A 627-amino-acid polypeptide reads, in one-letter code: Protein fem-1 homolog B (627 aa).

4 ANK repeats span residues 45 to 74 (QRST…VQTQ), 87 to 116 (DGAT…NVNH), 120 to 149 (TNST…NISI), and 153 to 182 (YDNT…DPNA). His185, Cys186, and His218 together coordinate Zn(2+). ANK repeat units lie at residues 186-215 (CGAT…AIVV) and 218-248 (HGMT…DRRS). The stretch at 344–377 (SHPIIYRGAVYADNMEFEQCIKLWLHALHLRQKG) is one TPR repeat. 2 ANK repeats span residues 483 to 527 (EGFT…EVNA) and 531 to 568 (EGNS…HTDM).

This sequence belongs to the fem-1 family. Component of a CRL2 E3 ubiquitin-protein ligase complex, also named ECS (Elongin BC-CUL2/5-SOCS-box protein) complex, composed of CUL2, Elongin BC (ELOB and ELOC), RBX1 and substrate-specific adapter FEM1B. Homooligomer. Interacts with PPM1F and PHTF1. Interacts with the death domain of FAS/TNFRSF6 and TNFRSF1A. Interacts with CHEK1. Interacts with NKX3-1. As to expression, widely expressed. Highly expressed in testis. Weakly expressed in other tissues.

It is found in the cytoplasm. The protein resides in the nucleus. It functions in the pathway protein modification; protein ubiquitination. Its activity is regulated as follows. Activity of the CRL2(FEM1B) complex toward FNIP1 is inhibited by BEX family proteins (BEX1, BEX2, BEX3, BEX4 and/or BEX5) in absence of reductive stress. Mechanistically, BEX proteins act as pseudosubstrate inhibitors that associate with FEM1B via zinc in absence of reductive stress, thereby preventing association between FEM1B and FNIP1. In terms of biological role, substrate-recognition component of a Cul2-RING (CRL2) E3 ubiquitin-protein ligase complex of the DesCEND (destruction via C-end degrons) pathway, which recognizes a C-degron located at the extreme C terminus of target proteins, leading to their ubiquitination and degradation. The C-degron recognized by the DesCEND pathway is usually a motif of less than ten residues and can be present in full-length proteins, truncated proteins or proteolytically cleaved forms. The CRL2(FEM1B) complex specifically recognizes proteins ending with -Gly-Leu-Asp-Arg, such as CDK5R1, leading to their ubiquitination and degradation. Also acts as a regulator of the reductive stress response by mediating ubiquitination of reduced FNIP1: in response to reductive stress, the CRL2(FEM1B) complex specifically recognizes a conserved Cys degron in FNIP1 when this degron is reduced, leading to FNIP1 degradation and subsequent activation of mitochondria to recalibrate reactive oxygen species (ROS). Mechanistically, recognizes and binds reduced FNIP1 through two interface zinc ions, which act as a molecular glue that recruit reduced FNIP1 to FEM1B. Promotes ubiquitination of GLI1, suppressing GLI1 transcriptional activator activity. Promotes ubiquitination and degradation of ANKRD37. Promotes ubiquitination and degradation of SLBP. Involved in apoptosis by acting as a death receptor-associated protein that mediates apoptosis. Also involved in glucose homeostasis in pancreatic islet. May also act as an adapter/mediator in replication stress-induced signaling that leads to the activation of CHEK1. This is Protein fem-1 homolog B from Homo sapiens (Human).